Consider the following 326-residue polypeptide: Putative F-box protein At3g22710 (326 aa).

The 50-residue stretch at 1-50 folds into the F-box domain; sequence MTMPDLPPDLVEEILSRVPATSVKKLRSTCTQWNAIFKDERFTEKHFSKA.

This chain is Putative F-box protein At3g22710, found in Arabidopsis thaliana (Mouse-ear cress).